Here is a 258-residue protein sequence, read N- to C-terminus: Heat-labile enterotoxin A chain (258 aa).

Residues 1–18 (MKNITFIFFILLASPLYA) form the signal peptide. 25–39 (RADSRPPDEIKRSGG) is a binding site for NAD(+). Glutamate 128 is a catalytic residue. Residues cysteine 205 and cysteine 217 are joined by a disulfide bond.

The protein belongs to the enterotoxin A family. As to quaternary structure, heterohexamer of one A chain and of five B chains.

The biological activity of the toxin is produced by the A chain, which activates intracellular adenyl cyclase. The chain is Heat-labile enterotoxin A chain (eltA) from Escherichia coli O78:H11 (strain H10407 / ETEC).